The following is a 521-amino-acid chain: Glutamate--cysteine ligase (521 aa).

It belongs to the glutamate--cysteine ligase type 1 family. Type 1 subfamily.

The catalysed reaction is L-cysteine + L-glutamate + ATP = gamma-L-glutamyl-L-cysteine + ADP + phosphate + H(+). Its pathway is sulfur metabolism; glutathione biosynthesis; glutathione from L-cysteine and L-glutamate: step 1/2. The chain is Glutamate--cysteine ligase (gshA) from Buchnera aphidicola subsp. Baizongia pistaciae (strain Bp).